We begin with the raw amino-acid sequence, 252 residues long: tRNA (guanine-N(1)-)-methyltransferase (252 aa).

Residues G117 and 137-142 (IGDYVL) contribute to the S-adenosyl-L-methionine site.

This sequence belongs to the RNA methyltransferase TrmD family. In terms of assembly, homodimer.

It is found in the cytoplasm. The catalysed reaction is guanosine(37) in tRNA + S-adenosyl-L-methionine = N(1)-methylguanosine(37) in tRNA + S-adenosyl-L-homocysteine + H(+). In terms of biological role, specifically methylates guanosine-37 in various tRNAs. The sequence is that of tRNA (guanine-N(1)-)-methyltransferase from Idiomarina loihiensis (strain ATCC BAA-735 / DSM 15497 / L2-TR).